The primary structure comprises 220 residues: Guanylate kinase (220 aa).

In terms of domain architecture, Guanylate kinase-like spans 3–180; the sequence is GRLFVMTGAS…AVADFLAILT (178 aa). 10–17 contributes to the ATP binding site; the sequence is GASGVGKG.

This sequence belongs to the guanylate kinase family.

It localises to the cytoplasm. It catalyses the reaction GMP + ATP = GDP + ADP. Functionally, essential for recycling GMP and indirectly, cGMP. The chain is Guanylate kinase from Thermus thermophilus (strain ATCC BAA-163 / DSM 7039 / HB27).